A 929-amino-acid polypeptide reads, in one-letter code: Bifunctional glutamine synthetase adenylyltransferase/adenylyl-removing enzyme (929 aa).

The tract at residues 1-423 (MSTPIDSSRA…RHFEQIFAAR (423 aa)) is adenylyl removase. The tract at residues 433-929 (ARIRPEQSGD…FQLWEDIFGT (497 aa)) is adenylyl transferase.

It belongs to the GlnE family. Mg(2+) is required as a cofactor.

The catalysed reaction is [glutamine synthetase]-O(4)-(5'-adenylyl)-L-tyrosine + phosphate = [glutamine synthetase]-L-tyrosine + ADP. The enzyme catalyses [glutamine synthetase]-L-tyrosine + ATP = [glutamine synthetase]-O(4)-(5'-adenylyl)-L-tyrosine + diphosphate. Its function is as follows. Involved in the regulation of glutamine synthetase GlnA, a key enzyme in the process to assimilate ammonia. When cellular nitrogen levels are high, the C-terminal adenylyl transferase (AT) inactivates GlnA by covalent transfer of an adenylyl group from ATP to specific tyrosine residue of GlnA, thus reducing its activity. Conversely, when nitrogen levels are low, the N-terminal adenylyl removase (AR) activates GlnA by removing the adenylyl group by phosphorolysis, increasing its activity. The regulatory region of GlnE binds the signal transduction protein PII (GlnB) which indicates the nitrogen status of the cell. This is Bifunctional glutamine synthetase adenylyltransferase/adenylyl-removing enzyme from Nitrosomonas europaea (strain ATCC 19718 / CIP 103999 / KCTC 2705 / NBRC 14298).